A 115-amino-acid polypeptide reads, in one-letter code: U3-lycotoxin-Ls1a (115 aa).

The N-terminal stretch at methionine 1–alanine 20 is a signal peptide. A propeptide spanning residues glutamate 21–arginine 44 is cleaved from the precursor. Disulfide bonds link cysteine 48–cysteine 63, cysteine 55–cysteine 72, cysteine 62–cysteine 87, and cysteine 74–cysteine 85.

The protein belongs to the neurotoxin 19 (CSTX) family. 01 subfamily. In terms of tissue distribution, expressed by the venom gland.

The protein resides in the secreted. The polypeptide is U3-lycotoxin-Ls1a (Lycosa singoriensis (Wolf spider)).